Here is a 189-residue protein sequence, read N- to C-terminus: HGPRTase-like protein 2 (189 aa).

It belongs to the purine/pyrimidine phosphoribosyltransferase family. Archaeal HPRT subfamily.

Its function is as follows. May catalyze a purine salvage reaction, the substrate is unknown. In Halalkalicoccus jeotgali (strain DSM 18796 / CECT 7217 / JCM 14584 / KCTC 4019 / B3), this protein is HGPRTase-like protein 2.